Here is a 61-residue protein sequence, read N- to C-terminus: Double gene block protein 2 (61 aa).

Residues 1–12 are Cytoplasmic-facing; the sequence is MACCRCDSSPGD. A helical; Signal-anchor for type II membrane protein transmembrane segment spans residues 13 to 33; the sequence is YSGALLILFISFVFFYITSLS. The Lumenal portion of the chain corresponds to 34 to 61; it reads PQGNTYVHHFDSSSVKTQYVGISTNGDG.

It belongs to the gammacarmovirus double gene block protein 2 family.

The protein localises to the host endoplasmic reticulum membrane. Its function is as follows. Cell-to-cell movement function. The protein is Double gene block protein 2 of Melon necrotic spot virus (MNSV).